Reading from the N-terminus, the 418-residue chain is Beta-arrestin-1 (418 aa).

The interval 1–163 (MGDKGTRVFK…LEEKIHKRNS (163 aa)) is interaction with SRC. An interaction with CHRM2 region spans residues 45–86 (PEYLKERRVYVTLTCAFRYGREDLDVLGLTFRKDLFVANVQS). Phosphotyrosine is present on Tyr47. Positions 250, 255, 324, and 326 each coordinate 1D-myo-inositol hexakisphosphate. The interaction with TRAF6 stretch occupies residues 318 to 418 (IVSYKVKVKL…GTGSPHLNNR (101 aa)). Disordered regions lie at residues 353-374 (HPKP…PVDT) and 397-418 (KGMK…LNNR). Positions 355-366 (KPKEEPPHREVP) are enriched in basic and acidic residues. Ser412 is modified (phosphoserine). Ser412 carries the post-translational modification Phosphoserine; by GRK5.

It belongs to the arrestin family. Monomer. Homodimer. Homooligomer; the self-association is mediated by InsP6-binding. Heterooligomer with ARRB2; the association is mediated by InsP6-binding. Interacts with ADRB2 (phosphorylated). Interacts with CHRM2 (phosphorylated). Interacts with LHCGR. Interacts with CYTH2 and CASR. Interacts with AP2B1 (dephosphorylated at 'Tyr-737'); phosphorylation of AP2B1 at 'Tyr-737' disrupts the interaction. Interacts (dephosphorylated at Ser-412) with CLTC. Interacts with CCR2 and GRK2. Interacts with CRR5. Interacts with PTAFR (phosphorylated on serine residues). Interacts with CLTC and MAP2K3. Interacts with CREB1. Interacts with TRAF6. Interacts with IGF1R and MDM2. Interacts with C5AR1. Interacts with PDE4D. Interacts with SRC (via the SH3 domain and the protein kinase domain); the interaction is independent of the phosphorylation state of SRC C-terminus. Interacts with TACR1. Interacts with RAF1. Interacts with CHUK, IKBKB and MAP3K14. Interacts with DVL1; the interaction is enhanced by phosphorylation of DVL1. Interacts with DVL2; the interaction is enhanced by phosphorylation of DVL2. Interacts with IGF1R. Associates with MAP kinase p38. Part of a MAPK signaling complex consisting of TACR1, ARRB1, SRC, MAPK1 (activated) and MAPK3 (activated). Part of a MAPK signaling complex consisting of F2RL1, ARRB1, RAF1, MAPK1 (activated) and MAPK3 (activated). Interacts with GPR143. Interacts with MAP2K4/MKK4. Interacts with HCK and CXCR1 (phosphorylated). Interacts with ACKR3 and ACKR4. Interacts with ARRDC1; the interaction is direct. Interacts with GPR61, GPR62 and GPR135. Post-translationally, constitutively phosphorylated at Ser-412 in the cytoplasm. At the plasma membrane, is rapidly dephosphorylated, a process that is required for clathrin binding and beta-2 adrenergic receptor/ADRB2 endocytosis but not for ADRB2 binding and desensitization. Once internalized, is rephosphorylated. The ubiquitination status appears to regulate the formation and trafficking of beta-arrestin-GPCR complexes and signaling. Ubiquitination appears to occur GPCR-specific. Ubiquitinated by MDM2; the ubiquitination is required for rapid internalization of ADRB2. Deubiquitinated by USP33; the deubiquitination leads to a dissociation of the beta-arrestin-GPCR complex. Stimulation of a class A GPCR, such as ADRB2, induces transient ubiquitination and subsequently promotes association with USP33. Predominantly localized in neuronal tissues and in the spleen.

Its subcellular location is the cytoplasm. The protein resides in the nucleus. It localises to the cell membrane. The protein localises to the membrane. It is found in the clathrin-coated pit. Its subcellular location is the cell projection. The protein resides in the pseudopodium. It localises to the cytoplasmic vesicle. In terms of biological role, functions in regulating agonist-mediated G-protein coupled receptor (GPCR) signaling by mediating both receptor desensitization and resensitization processes. During homologous desensitization, beta-arrestins bind to the GPRK-phosphorylated receptor and sterically preclude its coupling to the cognate G-protein; the binding appears to require additional receptor determinants exposed only in the active receptor conformation. The beta-arrestins target many receptors for internalization by acting as endocytic adapters (CLASPs, clathrin-associated sorting proteins) and recruiting the GPRCs to the adapter protein 2 complex 2 (AP-2) in clathrin-coated pits (CCPs). However, the extent of beta-arrestin involvement appears to vary significantly depending on the receptor, agonist and cell type. Internalized arrestin-receptor complexes traffic to intracellular endosomes, where they remain uncoupled from G-proteins. Two different modes of arrestin-mediated internalization occur. Class A receptors, like ADRB2, OPRM1, ENDRA, D1AR and ADRA1B dissociate from beta-arrestin at or near the plasma membrane and undergo rapid recycling. Class B receptors, like AVPR2, AGTR1, NTSR1, TRHR and TACR1 internalize as a complex with arrestin and traffic with it to endosomal vesicles, presumably as desensitized receptors, for extended periods of time. Receptor resensitization then requires that receptor-bound arrestin is removed so that the receptor can be dephosphorylated and returned to the plasma membrane. Involved in internalization of P2RY4 and UTP-stimulated internalization of P2RY2. Involved in phosphorylation-dependent internalization of OPRD1 ands subsequent recycling. Involved in the degradation of cAMP by recruiting cAMP phosphodiesterases to ligand-activated receptors. Beta-arrestins function as multivalent adapter proteins that can switch the GPCR from a G-protein signaling mode that transmits short-lived signals from the plasma membrane via small molecule second messengers and ion channels to a beta-arrestin signaling mode that transmits a distinct set of signals that are initiated as the receptor internalizes and transits the intracellular compartment. Acts as a signaling scaffold for MAPK pathways such as MAPK1/3 (ERK1/2). ERK1/2 activated by the beta-arrestin scaffold is largely excluded from the nucleus and confined to cytoplasmic locations such as endocytic vesicles, also called beta-arrestin signalosomes. Recruits c-Src/SRC to ADRB2 resulting in ERK activation. GPCRs for which the beta-arrestin-mediated signaling relies on both ARRB1 and ARRB2 (codependent regulation) include ADRB2, F2RL1 and PTH1R. For some GPCRs the beta-arrestin-mediated signaling relies on either ARRB1 or ARRB2 and is inhibited by the other respective beta-arrestin form (reciprocal regulation). Inhibits ERK1/2 signaling in AGTR1- and AVPR2-mediated activation (reciprocal regulation). Is required for SP-stimulated endocytosis of NK1R and recruits c-Src/SRC to internalized NK1R resulting in ERK1/2 activation, which is required for the antiapoptotic effects of SP. Is involved in proteinase-activated F2RL1-mediated ERK activity. Acts as a signaling scaffold for the AKT1 pathway. Is involved in alpha-thrombin-stimulated AKT1 signaling. Is involved in IGF1-stimulated AKT1 signaling leading to increased protection from apoptosis. Involved in activation of the p38 MAPK signaling pathway and in actin bundle formation. Involved in F2RL1-mediated cytoskeletal rearrangement and chemotaxis. Involved in AGTR1-mediated stress fiber formation by acting together with GNAQ to activate RHOA. Appears to function as signaling scaffold involved in regulation of MIP-1-beta-stimulated CCR5-dependent chemotaxis. Involved in attenuation of NF-kappa-B-dependent transcription in response to GPCR or cytokine stimulation by interacting with and stabilizing CHUK. May serve as nuclear messenger for GPCRs. Involved in OPRD1-stimulated transcriptional regulation by translocating to CDKN1B and FOS promoter regions and recruiting EP300 resulting in acetylation of histone H4. Involved in regulation of LEF1 transcriptional activity via interaction with DVL1 and/or DVL2 Also involved in regulation of receptors other than GPCRs. Involved in Toll-like receptor and IL-1 receptor signaling through the interaction with TRAF6 which prevents TRAF6 autoubiquitination and oligomerization required for activation of NF-kappa-B and JUN. Binds phosphoinositides. Binds inositolhexakisphosphate (InsP6). Involved in IL8-mediated granule release in neutrophils. Required for atypical chemokine receptor ACKR2-induced RAC1-LIMK1-PAK1-dependent phosphorylation of cofilin (CFL1) and for the up-regulation of ACKR2 from endosomal compartment to cell membrane, increasing its efficiency in chemokine uptake and degradation. Involved in the internalization of the atypical chemokine receptor ACKR3. Negatively regulates the NOTCH signaling pathway by mediating the ubiquitination and degradation of NOTCH1 by ITCH. Participates in the recruitment of the ubiquitin-protein ligase to the receptor. The protein is Beta-arrestin-1 of Rattus norvegicus (Rat).